A 179-amino-acid polypeptide reads, in one-letter code: Large ribosomal subunit protein uL5 (179 aa).

It belongs to the universal ribosomal protein uL5 family. Part of the 50S ribosomal subunit; part of the 5S rRNA/L5/L18/L25 subcomplex. Contacts the 5S rRNA and the P site tRNA. Forms a bridge to the 30S subunit in the 70S ribosome.

Its function is as follows. This is one of the proteins that bind and probably mediate the attachment of the 5S RNA into the large ribosomal subunit, where it forms part of the central protuberance. In the 70S ribosome it contacts protein S13 of the 30S subunit (bridge B1b), connecting the 2 subunits; this bridge is implicated in subunit movement. Contacts the P site tRNA; the 5S rRNA and some of its associated proteins might help stabilize positioning of ribosome-bound tRNAs. The protein is Large ribosomal subunit protein uL5 of Bordetella petrii (strain ATCC BAA-461 / DSM 12804 / CCUG 43448).